Consider the following 204-residue polypeptide: Mediator of RNA polymerase II transcription subunit 31 (204 aa).

The tract at residues Q134–N204 is disordered. The span at S161–A194 shows a compositional bias: low complexity.

It belongs to the Mediator complex subunit 31 family. Component of the Mediator complex, which includes at least MED4, MED6, MED14, MED17, MED18, MED20, MED21, MED23, MED24, MED27, MED30 and MED31.

Its subcellular location is the nucleus. Its function is as follows. Component of the Mediator complex, a coactivator involved in the regulated transcription of nearly all RNA polymerase II-dependent genes. Mediator functions as a bridge to convey information from gene-specific regulatory proteins to the basal RNA polymerase II transcription machinery. Mediator is recruited to promoters by direct interactions with regulatory proteins and serves as a scaffold for the assembly of a functional preinitiation complex with RNA polymerase II and the general transcription factors. Required for activated transcription of the MtnA gene. In Drosophila melanogaster (Fruit fly), this protein is Mediator of RNA polymerase II transcription subunit 31 (MED31).